We begin with the raw amino-acid sequence, 326 residues long: Acetyl-coenzyme A carboxylase carboxyl transferase subunit alpha (326 aa).

In terms of domain architecture, CoA carboxyltransferase C-terminal spans 45–298 (LEARAMQLRE…KQVLLENLDE (254 aa)).

Belongs to the AccA family. In terms of assembly, acetyl-CoA carboxylase is a heterohexamer composed of biotin carboxyl carrier protein (AccB), biotin carboxylase (AccC) and two subunits each of ACCase subunit alpha (AccA) and ACCase subunit beta (AccD).

It is found in the cytoplasm. The enzyme catalyses N(6)-carboxybiotinyl-L-lysyl-[protein] + acetyl-CoA = N(6)-biotinyl-L-lysyl-[protein] + malonyl-CoA. Its pathway is lipid metabolism; malonyl-CoA biosynthesis; malonyl-CoA from acetyl-CoA: step 1/1. Component of the acetyl coenzyme A carboxylase (ACC) complex. First, biotin carboxylase catalyzes the carboxylation of biotin on its carrier protein (BCCP) and then the CO(2) group is transferred by the carboxyltransferase to acetyl-CoA to form malonyl-CoA. The protein is Acetyl-coenzyme A carboxylase carboxyl transferase subunit alpha of Nostoc punctiforme (strain ATCC 29133 / PCC 73102).